Consider the following 385-residue polypeptide: 8-amino-7-oxononanoate synthase (385 aa).

Arg-21 is a substrate binding site. 108–109 provides a ligand contact to pyridoxal 5'-phosphate; sequence GF. A substrate-binding site is contributed by His-133. Ser-179, His-207, and Thr-233 together coordinate pyridoxal 5'-phosphate. Lys-236 carries the post-translational modification N6-(pyridoxal phosphate)lysine. Thr-352 contributes to the substrate binding site.

The protein belongs to the class-II pyridoxal-phosphate-dependent aminotransferase family. BioF subfamily. Homodimer. The cofactor is pyridoxal 5'-phosphate.

It catalyses the reaction 6-carboxyhexanoyl-[ACP] + L-alanine + H(+) = (8S)-8-amino-7-oxononanoate + holo-[ACP] + CO2. It participates in cofactor biosynthesis; biotin biosynthesis. Catalyzes the decarboxylative condensation of pimeloyl-[acyl-carrier protein] and L-alanine to produce 8-amino-7-oxononanoate (AON), [acyl-carrier protein], and carbon dioxide. This is 8-amino-7-oxononanoate synthase from Salmonella paratyphi B (strain ATCC BAA-1250 / SPB7).